We begin with the raw amino-acid sequence, 305 residues long: Aspartate carbamoyltransferase catalytic subunit (305 aa).

The carbamoyl phosphate site is built by Arg54 and Thr55. An L-aspartate-binding site is contributed by Lys83. 3 residues coordinate carbamoyl phosphate: Arg104, His132, and Gln135. L-aspartate contacts are provided by Arg165 and Arg226. Carbamoyl phosphate-binding residues include Leu265 and Pro266.

The protein belongs to the aspartate/ornithine carbamoyltransferase superfamily. ATCase family. Heterooligomer of catalytic and regulatory chains.

It carries out the reaction carbamoyl phosphate + L-aspartate = N-carbamoyl-L-aspartate + phosphate + H(+). Its pathway is pyrimidine metabolism; UMP biosynthesis via de novo pathway; (S)-dihydroorotate from bicarbonate: step 2/3. Its function is as follows. Catalyzes the condensation of carbamoyl phosphate and aspartate to form carbamoyl aspartate and inorganic phosphate, the committed step in the de novo pyrimidine nucleotide biosynthesis pathway. The polypeptide is Aspartate carbamoyltransferase catalytic subunit (Pyrobaculum arsenaticum (strain DSM 13514 / JCM 11321 / PZ6)).